Reading from the N-terminus, the 428-residue chain is Gamma-glutamyl phosphate reductase (428 aa).

The protein belongs to the gamma-glutamyl phosphate reductase family.

It localises to the cytoplasm. The catalysed reaction is L-glutamate 5-semialdehyde + phosphate + NADP(+) = L-glutamyl 5-phosphate + NADPH + H(+). Its pathway is amino-acid biosynthesis; L-proline biosynthesis; L-glutamate 5-semialdehyde from L-glutamate: step 2/2. In terms of biological role, catalyzes the NADPH-dependent reduction of L-glutamate 5-phosphate into L-glutamate 5-semialdehyde and phosphate. The product spontaneously undergoes cyclization to form 1-pyrroline-5-carboxylate. This chain is Gamma-glutamyl phosphate reductase, found in Picosynechococcus sp. (strain ATCC 27264 / PCC 7002 / PR-6) (Agmenellum quadruplicatum).